A 503-amino-acid polypeptide reads, in one-letter code: Cytochrome P450 11B2, mitochondrial (503 aa).

The N-terminal 24 residues, 1-24 (MALRAKAEVCVAAPWLSLQRARAL), are a transit peptide targeting the mitochondrion. Residue Phe381 coordinates 21-hydroxyprogesterone. Cys450 lines the heme pocket.

It belongs to the cytochrome P450 family. It depends on heme as a cofactor. Expressed sporadically in the zona glomerulosa (zG) of the adrenal cortex (conventional zonation), as well as in aldosterone-producing cell clusters (APCCs) composed of morphological zG cells in contact with the capsule (variegated zonation).

It is found in the mitochondrion inner membrane. It carries out the reaction a steroid + 2 reduced [adrenodoxin] + O2 + 2 H(+) = an 11beta-hydroxysteroid + 2 oxidized [adrenodoxin] + H2O. The enzyme catalyses 21-hydroxyprogesterone + 2 reduced [adrenodoxin] + O2 + 2 H(+) = corticosterone + 2 oxidized [adrenodoxin] + H2O. The catalysed reaction is corticosterone + 2 reduced [adrenodoxin] + O2 + 2 H(+) = 18-hydroxycorticosterone + 2 oxidized [adrenodoxin] + H2O. It catalyses the reaction 18-hydroxycorticosterone + 2 reduced [adrenodoxin] + O2 + 2 H(+) = aldosterone + 2 oxidized [adrenodoxin] + 2 H2O. It carries out the reaction 11-deoxycortisol + 2 reduced [adrenodoxin] + O2 + 2 H(+) = cortisol + 2 oxidized [adrenodoxin] + H2O. The enzyme catalyses 21-hydroxyprogesterone + 2 reduced [adrenodoxin] + O2 + 2 H(+) = 18-hydroxy-11-deoxycorticosterone + 2 oxidized [adrenodoxin] + H2O. The catalysed reaction is cortisol + 2 reduced [adrenodoxin] + O2 + 2 H(+) = 18-hydroxycortisol + 2 oxidized [adrenodoxin] + H2O. It catalyses the reaction 18-hydroxycortisol + 2 reduced [adrenodoxin] + O2 + 2 H(+) = 18-oxocortisol + 2 oxidized [adrenodoxin] + 2 H2O. It functions in the pathway steroid biosynthesis. Functionally, a cytochrome P450 monooxygenase that catalyzes the biosynthesis of aldosterone, the main mineralocorticoid in the human body responsible for salt and water homeostasis, thus involved in blood pressure regulation, arterial hypertension, and the development of heart failure. Catalyzes three sequential oxidative reactions of 11-deoxycorticosterone (21-hydroxyprogesterone), namely 11-beta hydroxylation, followed by two successive oxidations at C18 yielding 18-hydroxy and then 18-oxo intermediates (that would not leave the enzyme active site during the consecutive hydroxylation reactions), ending with the formation of aldosterone. Can also produce 18-hydroxycortisol and 18-oxocortisol, derived from successive oxidations of cortisol at C18, normally found at very low levels, but significantly increased in primary aldosteronism, the most common form of secondary hypertension. Mechanistically, uses molecular oxygen inserting one oxygen atom into a substrate and reducing the second into a water molecule. Two electrons are provided by NADPH via a two-protein mitochondrial transfer system comprising flavoprotein FDXR (adrenodoxin/ferredoxin reductase) and nonheme iron-sulfur protein FDX1 or FDX2 (adrenodoxin/ferredoxin). Could also be involved in the androgen metabolic pathway. This chain is Cytochrome P450 11B2, mitochondrial, found in Homo sapiens (Human).